Here is a 607-residue protein sequence, read N- to C-terminus: Actin-related protein 5 (607 aa).

Residue Lys-283 forms a Glycyl lysine isopeptide (Lys-Gly) (interchain with G-Cter in SUMO2) linkage. Coiled coils occupy residues 288 to 327 (TLTS…LDRL) and 355 to 384 (EELQ…NLEV). Residues 584–596 (SRSSDAQASSKGS) are compositionally biased toward low complexity. Positions 584–607 (SRSSDAQASSKGSAAGGGGAGEQA) are disordered. Gly residues predominate over residues 597–607 (AAGGGGAGEQA).

The protein belongs to the actin family. ARP5 subfamily. In terms of assembly, component of the chromatin remodeling INO80 complex; specifically part of a complex module associated with the helicase ATP-binding and the helicase C-terminal domain of INO80. Interacts with DDB1. Interacts with ACTR8; the interaction is observed in asynchronous (interphase) cells but not in metaphase-arrested cells indicative for a possible dissociation of the INO80 complex in mitotic cells.

It localises to the nucleus. The protein resides in the cytoplasm. Functionally, proposed core component of the chromatin remodeling INO80 complex which is involved in transcriptional regulation, DNA replication and probably DNA repair. Involved in DNA double-strand break repair and UV-damage excision repair. This Homo sapiens (Human) protein is Actin-related protein 5 (ACTR5).